The chain runs to 208 residues: Type 4 adapter protein LvgA (208 aa).

The interval 184–208 (GYGYPPESPRENYKHPVSSATTARK) is disordered.

As to quaternary structure, the T4BSS is a complex nanomachine composed of several subcomplexes. This subunit is part of the Type IV Coupling Complex (T4CC), a subcomplex composed of the DotLMNYZ core and the IcmSW-LvgA adapter subunits, linked by the C-terminal tail of DotL.

The protein resides in the cytoplasm. Component of the Dot/Icm type IVB secretion system (T4BSS), which is used to inject bacterial effector proteins into eukaryotic host cells. Part of a subcomplex which recruits effector proteins and delivers them to the core transmembrane subcomplex. Is a critical subunit for binding a subset of effector proteins. Recognizes more than one type of binding motif. May be a critical factor that confers host specificity. Necessary for full virulence of the bacterium in guinea pigs and presumably humans. The chain is Type 4 adapter protein LvgA from Legionella pneumophila.